The following is a 385-amino-acid chain: NADH-quinone oxidoreductase subunit D 2 (385 aa).

This sequence belongs to the complex I 49 kDa subunit family. As to quaternary structure, NDH-1 is composed of 14 different subunits. Subunits NuoB, C, D, E, F, and G constitute the peripheral sector of the complex.

The protein localises to the cell membrane. The catalysed reaction is a quinone + NADH + 5 H(+)(in) = a quinol + NAD(+) + 4 H(+)(out). Its function is as follows. NDH-1 shuttles electrons from NADH, via FMN and iron-sulfur (Fe-S) centers, to quinones in the respiratory chain. The immediate electron acceptor for the enzyme in this species is believed to be a menaquinone. Couples the redox reaction to proton translocation (for every two electrons transferred, four hydrogen ions are translocated across the cytoplasmic membrane), and thus conserves the redox energy in a proton gradient. This is NADH-quinone oxidoreductase subunit D 2 from Salinispora arenicola (strain CNS-205).